Here is a 482-residue protein sequence, read N- to C-terminus: UDP-N-acetylmuramate--L-alanine ligase (482 aa).

An ATP-binding site is contributed by glycine 123–threonine 129.

Belongs to the MurCDEF family.

The protein resides in the cytoplasm. It carries out the reaction UDP-N-acetyl-alpha-D-muramate + L-alanine + ATP = UDP-N-acetyl-alpha-D-muramoyl-L-alanine + ADP + phosphate + H(+). It participates in cell wall biogenesis; peptidoglycan biosynthesis. Cell wall formation. The polypeptide is UDP-N-acetylmuramate--L-alanine ligase (Pseudomonas putida (strain ATCC 700007 / DSM 6899 / JCM 31910 / BCRC 17059 / LMG 24140 / F1)).